Reading from the N-terminus, the 581-residue chain is Multidrug and toxin extrusion protein 2 (581 aa).

Over 1-33 the chain is Cytoplasmic; the sequence is MDSLQDTVPLDHGGCCPALSRLVPRGFGTEMWT. A helical transmembrane segment spans residues 34–54; it reads LFALSGPLFLFQVLTFMIYIV. The Extracellular portion of the chain corresponds to 55–66; the sequence is STVFCGHLGKVE. A helical membrane pass occupies residues 67 to 87; it reads LASVTLAVAFVNVCGVSVGVG. Residues 88 to 119 are Cytoplasmic-facing; that stretch reads LSSACDTLMSQSFGSPNKKHVGVILQRGALVL. The chain crosses the membrane as a helical span at residues 120 to 140; that stretch reads LLCCLPCWALFLNTQHILLLF. Residues 141-153 are Extracellular-facing; it reads RQDPEVSRLTQDY. Residues 154 to 174 form a helical membrane-spanning segment; that stretch reads VMIFIPGLPVIFLYNLLAKYL. Residues 175 to 183 lie on the Cytoplasmic side of the membrane; it reads QNQKITWPQ. Residues 184–204 form a helical membrane-spanning segment; it reads VLSGVVGNCVNGVANYALVSV. The Extracellular segment spans residues 205 to 212; that stretch reads LNLGVRGS. A helical membrane pass occupies residues 213–233; that stretch reads AYANIISQFAQTVFLLLYIVL. Over 234-253 the chain is Cytoplasmic; the sequence is KKLHLETWAGWSSQCLQDWG. The helical transmembrane segment at 254–273 threads the bilayer; it reads PFFSLAVPSMLMICVEWWAY. The Extracellular segment spans residues 274-317; it reads EIGSFLMGLLSVVDLSAQAVIYEVATVTYMRHSHHLAYTAHVAR. A helical transmembrane segment spans residues 318 to 338; it reads IPLGLSIGVCVRVGMALGAAD. Residues 339 to 346 are Cytoplasmic-facing; that stretch reads TVQAKRSA. The helical transmembrane segment at 347–367 threads the bilayer; it reads VSGVLSIVGISLVLGTLISIL. The Extracellular portion of the chain corresponds to 368–380; it reads KNQLGHIFTNDED. The chain crosses the membrane as a helical span at residues 381–401; sequence VIALVSQVLPVYSVFHVFEAI. Residues 402–420 are Cytoplasmic-facing; that stretch reads CCVYGGVLRGTGKQAFGAA. Residues 421–441 traverse the membrane as a helical segment; sequence VNAITYYIIGLPLGILLTFVV. Over 442 to 444 the chain is Extracellular; it reads RMR. The chain crosses the membrane as a helical span at residues 445–465; that stretch reads IMGLWLGMLACVFLATAAFVA. At 466 to 557 the chain is on the cytoplasmic side; sequence YTARLDWKLA…LSVKQLVIRR (92 aa). A disordered region spans residues 481–513; it reads KHSGQQQQQQRAESTATRSGPEKAVLSSVATGS. Residues 558–578 form a helical membrane-spanning segment; sequence GAALGAASATLMVGLTVRILA. The Extracellular segment spans residues 579 to 581; sequence TRH.

This sequence belongs to the multi antimicrobial extrusion (MATE) (TC 2.A.66.1) family.

The protein localises to the cell membrane. It localises to the apical cell membrane. It catalyses the reaction thiamine(out) + H(+)(in) = thiamine(in) + H(+)(out). It carries out the reaction estrone 3-sulfate(in) + H(+)(out) = estrone 3-sulfate(out) + H(+)(in). The enzyme catalyses creatinine(in) + H(+)(out) = creatinine(out) + H(+)(in). Multidrug efflux pump that functions as a H(+)/organic cation antiporter. Mediates the efflux of cationic compounds, such as the model cations, tetraethylammonium (TEA) and 1-methyl-4-phenylpyridinium (MPP+), the platinum-based drug oxaliplatin or weak bases that are positively charged at physiological pH, cimetidine or the antidiabetic drug metformin. Mediates the efflux of the endogenous compounds creatinine, thiamine and estrone-3-sulfate. Plays a physiological role in the excretion of drugs, toxins and endogenous metabolites through the kidney. This is Multidrug and toxin extrusion protein 2 (SLC47A2) from Pongo abelii (Sumatran orangutan).